Consider the following 1081-residue polypeptide: Dyslexia-associated protein KIAA0319 homolog (1081 aa).

The signal sequence occupies residues 1–22 (MVSPPGVLSSLLLLAAMAGGSS). The MANSC domain maps to 23–99 (QQCSEGRTYS…PRTTGPIRSY (77 aa)). The Extracellular portion of the chain corresponds to 23-964 (QQCSEGRTYS…WDGESNCEWS (942 aa)). The tract at residues 168 to 331 (LQPSNQQDPR…VLTGLTPPPW (164 aa)) is disordered. N196 carries an N-linked (GlcNAc...) asparagine glycan. Polar residues-rich tracts occupy residues 197–206 (ATATGDNSAA) and 222–234 (EQLQ…TWSP). N228 carries an N-linked (GlcNAc...) asparagine glycan. Low complexity predominate over residues 236 to 255 (PGHSSISSVWPSSASPLPTE). N272 and N302 each carry an N-linked (GlcNAc...) asparagine glycan. 2 stretches are compositionally biased toward polar residues: residues 283 to 307 (HNPS…TVTP) and 314 to 324 (TPTFPTSTVLT). 5 consecutive PKD domains span residues 345 to 436 (AVSA…VMPA), 444 to 533 (VAVV…IRDA), 539 to 629 (VANA…VQAE), 630 to 723 (NNQA…VKKE), and 729 to 820 (RAQA…VLPD). N430, N507, N522, N545, and N560 each carry an N-linked (GlcNAc...) asparagine glycan. N742 carries N-linked (GlcNAc...) asparagine glycosylation. A helical transmembrane segment spans residues 965–985 (VFYVAALALTLTLLTGAVSWL). The Cytoplasmic segment spans residues 986–1081 (CICCCRRRKR…VSFGYYSKDR (96 aa)). The Endocytosis signal signature appears at 1004-1007 (YTIL). Position 1009 is a phosphoserine (S1009).

In terms of assembly, homodimer. Interacts with AP2M1; required for clathrin-mediated endocytosis. In terms of processing, N-glycosylated. Post-translationally, O-glycosylated. Shedding of the extracellular domain and intramembrane cleavage produce several proteolytic products. The intramembrane cleavage releases a soluble cytoplasmic polypeptide that translocates to the nucleolus.

It localises to the cell membrane. It is found in the early endosome membrane. Its function is as follows. Involved in neuronal migration during development of the cerebral neocortex. May function in a cell autonomous and a non-cell autonomous manner and play a role in appropriate adhesion between migrating neurons and radial glial fibers. May also regulate growth and differentiation of dendrites. The protein is Dyslexia-associated protein KIAA0319 homolog (Kiaa0319) of Mus musculus (Mouse).